Here is a 202-residue protein sequence, read N- to C-terminus: Dephospho-CoA kinase (202 aa).

The DPCK domain occupies 6-202; the sequence is KISVTGDPSS…QCFKALKGTI (197 aa). 14 to 19 is an ATP binding site; that stretch reads SSGKTE.

Belongs to the CoaE family.

The protein resides in the cytoplasm. The enzyme catalyses 3'-dephospho-CoA + ATP = ADP + CoA + H(+). Its pathway is cofactor biosynthesis; coenzyme A biosynthesis; CoA from (R)-pantothenate: step 5/5. Functionally, catalyzes the phosphorylation of the 3'-hydroxyl group of dephosphocoenzyme A to form coenzyme A. The protein is Dephospho-CoA kinase of Chlamydia trachomatis serovar D (strain ATCC VR-885 / DSM 19411 / UW-3/Cx).